The sequence spans 381 residues: D-rhamnosyltransferase WbpZ (381 aa).

Substrate contacts are provided by Glu-19, His-116, Lys-206, and Val-252.

Belongs to the glycosyltransferase group 1 family. Glycosyltransferase 4 subfamily.

Its subcellular location is the cytoplasm. It catalyses the reaction GDP-alpha-D-rhamnose + N-acetyl-alpha-D-glucosaminyl-di-trans,octa-cis-undecaprenyl diphosphate = alpha-D-rhamnosyl-(1-&gt;3)-N-acetyl-alpha-D-glucosaminyl-1-diphospho-di-trans,octa-cis-undecaprenol + GDP + H(+). It carries out the reaction GDP-alpha-D-rhamnose + N-acetyl-alpha-D-galactosaminyl-di-trans,octa-cis-undecaprenyl diphosphate = alpha-D-rhamnosyl-(1-&gt;3)-N-acetyl-alpha-D-galactosaminyl-1-diphospho-di-trans,octa-cis-undecaprenol + GDP + H(+). The enzyme catalyses N-acetyl-alpha-D-glucosaminyl-di-trans,octa-cis-undecaprenyl diphosphate + GDP-alpha-D-mannose = alpha-D-mannosyl-(1-&gt;3)-N-acetyl-alpha-D-glucosaminyl-di-trans,octa-cis-undecaprenyl diphosphate + GDP + H(+). The catalysed reaction is N-acetyl-alpha-D-galactosaminyl-di-trans,octa-cis-undecaprenyl diphosphate + GDP-alpha-D-mannose = alpha-D-mannosyl-(1-&gt;3)-N-acetyl-alpha-D-galctosaminyl-1-diphospho-di-trans,octa-cis-undecaprenol + GDP + H(+). It functions in the pathway lipopolysaccharide biosynthesis; LPS oligosaccharide biosynthesis. Not activated by dithiothreitol (DTT) using GlcNAc-alpha-PO(3)-PO(3)-phenylundecyl (GlcNAc-PP-PhU) as acceptor substrate. 0.25% Triton X-100 and 0.125% NP-40 increases the activity 2.5-fold and 2-fold, respectively. 0.125% octyl glucoside has little effect on activity. Slightly increased activity with Mg(2+) and Pb(2+), while no effect with Mn(2+), Co(2+), Ni(2+), Cu(2+), Zn(2+), Ca(2+) or EDTA. Not inhibited by N-butyryl-galactosamine-alpha-benzyl or N-butyryl-glucosamine-beta-benzyl. Bis-imidazolium salts having aliphatic spacer groups with 4 or 6 carbons have little effect on activity, but spacer groups of 18-22 aliphatic carbons inhibit activity, with the most potent inhibitor being bis-imidazolium salt having a 20-carbon chain spacer length. In terms of biological role, non-processive alpha-1,3-D-rhamnosyltransferase. Catalyzes the transfer of one D-rhamnose (D-Rha) residue from donor substrate GDP-D-Rha in alpha-1-3 linkage to both GlcNAc- and GalNAc-diphosphate-lipid acceptor substrates. Is also able to transfer D-mannose (D-Man) to these acceptors at a lower level. Nucleotide sugars GDP-D-Rha, GDP-Fuc, UDP-Gal, UDP-GalNAc, UDP-GlcNAc and CMP-sialic acid cannot act as donor substrates. Only compounds with a diphosphate as the aglycone group can act as acceptor substrates. No activity is detected with compounds containing a diphosphate mimic. Fluorescent undecyl-anthracenyl group-containing compounds, such as GlcNAc-PO(3)-PO(3)-AnthrU and GalNAc-PO(3)-PO(3)-AnthrU, are also good acceptor substrates. Involved in the biosynthesis of the common polysaccharide antigen (CPA), also called A band, which is one of the two major cell surface O-antigens of the P.aeruginosa lipopolysaccharide. Involved in susceptibility to antibiotic colistin. This Pseudomonas aeruginosa (strain ATCC 15692 / DSM 22644 / CIP 104116 / JCM 14847 / LMG 12228 / 1C / PRS 101 / PAO1) protein is D-rhamnosyltransferase WbpZ.